The following is a 417-amino-acid chain: NADH-quinone oxidoreductase subunit D (417 aa).

This sequence belongs to the complex I 49 kDa subunit family. NDH-1 is composed of 14 different subunits. Subunits NuoB, C, D, E, F, and G constitute the peripheral sector of the complex.

Its subcellular location is the cell inner membrane. The catalysed reaction is a quinone + NADH + 5 H(+)(in) = a quinol + NAD(+) + 4 H(+)(out). Its function is as follows. NDH-1 shuttles electrons from NADH, via FMN and iron-sulfur (Fe-S) centers, to quinones in the respiratory chain. The immediate electron acceptor for the enzyme in this species is believed to be ubiquinone. Couples the redox reaction to proton translocation (for every two electrons transferred, four hydrogen ions are translocated across the cytoplasmic membrane), and thus conserves the redox energy in a proton gradient. The protein is NADH-quinone oxidoreductase subunit D of Nitrosospira multiformis (strain ATCC 25196 / NCIMB 11849 / C 71).